Here is a 148-residue protein sequence, read N- to C-terminus: UPF0756 membrane protein ESA_02180 (148 aa).

Helical transmembrane passes span 4-24, 51-71, 86-106, and 112-132; these read ITLL…NMAV, VTVG…SGTL, LVAI…VALM, and IVAG…GVPV.

This sequence belongs to the UPF0756 family.

The protein localises to the cell membrane. The sequence is that of UPF0756 membrane protein ESA_02180 from Cronobacter sakazakii (strain ATCC BAA-894) (Enterobacter sakazakii).